Reading from the N-terminus, the 89-residue chain is Small ribosomal subunit protein uS15 (89 aa).

Belongs to the universal ribosomal protein uS15 family. Part of the 30S ribosomal subunit. Forms a bridge to the 50S subunit in the 70S ribosome, contacting the 23S rRNA.

Functionally, one of the primary rRNA binding proteins, it binds directly to 16S rRNA where it helps nucleate assembly of the platform of the 30S subunit by binding and bridging several RNA helices of the 16S rRNA. Its function is as follows. Forms an intersubunit bridge (bridge B4) with the 23S rRNA of the 50S subunit in the ribosome. The chain is Small ribosomal subunit protein uS15 from Polynucleobacter necessarius subsp. necessarius (strain STIR1).